A 520-amino-acid polypeptide reads, in one-letter code: Mu-like prophage FluMu protein gp29 (520 aa).

This sequence to phage Mu protein gp29.

This chain is Mu-like prophage FluMu protein gp29, found in Haemophilus influenzae (strain ATCC 51907 / DSM 11121 / KW20 / Rd).